Reading from the N-terminus, the 294-residue chain is N-acetylmuramic acid 6-phosphate etherase (294 aa).

Residues 54–217 form the SIS domain; sequence VIQSFEEEGR…STASMIGVGK (164 aa). E82 serves as the catalytic Proton donor. E113 is a catalytic residue.

The protein belongs to the GCKR-like family. MurNAc-6-P etherase subfamily. Homodimer.

The enzyme catalyses N-acetyl-D-muramate 6-phosphate + H2O = N-acetyl-D-glucosamine 6-phosphate + (R)-lactate. The protein operates within amino-sugar metabolism; N-acetylmuramate degradation. Specifically catalyzes the cleavage of the D-lactyl ether substituent of MurNAc 6-phosphate, producing GlcNAc 6-phosphate and D-lactate. This chain is N-acetylmuramic acid 6-phosphate etherase, found in Bacillus cereus (strain 03BB102).